The following is a 170-amino-acid chain: uncharacterized protein (170 aa).

An N-terminal signal peptide occupies residues 1–28 (MTGGVMSQKFVVGAGLLVCSVCSLSAMA).

It belongs to the fimbrial protein family.

Functionally, part of the yfcOPQRSUV fimbrial operon. Could contribute to adhesion to various surfaces in specific environmental niches. Increases adhesion to eukaryotic T24 bladder epithelial cells in the absence of fim genes. This is an uncharacterized protein from Escherichia coli (strain K12).